The following is a 429-amino-acid chain: Cyclin-B2-3 (429 aa).

Basic and acidic residues predominate over residues 86–101 (ADHKPHIRDEETKKPD). Residues 86–109 (ADHKPHIRDEETKKPDSVSSEEPE) form a disordered region.

Belongs to the cyclin family. Cyclin AB subfamily.

This Arabidopsis thaliana (Mouse-ear cress) protein is Cyclin-B2-3 (CYCB2-3).